A 413-amino-acid polypeptide reads, in one-letter code: Glucose-1-phosphatase (413 aa).

A signal peptide spans 1 to 22 (MKKSLLAVAVAGAVLLSSAVQA). R39 contacts substrate. H40 acts as the Nucleophile in catalysis. Substrate-binding residues include R43, R116, and E218. D312 serves as the catalytic Proton donor.

Belongs to the histidine acid phosphatase family. Homodimer.

It is found in the periplasm. The enzyme catalyses alpha-D-glucose 1-phosphate + H2O = D-glucose + phosphate. In Salmonella typhimurium (strain LT2 / SGSC1412 / ATCC 700720), this protein is Glucose-1-phosphatase (agp).